Here is a 156-residue protein sequence, read N- to C-terminus: Protein-export protein SecB (156 aa).

Belongs to the SecB family. In terms of assembly, homotetramer, a dimer of dimers. One homotetramer interacts with 1 SecA dimer.

The protein localises to the cytoplasm. Functionally, one of the proteins required for the normal export of preproteins out of the cell cytoplasm. It is a molecular chaperone that binds to a subset of precursor proteins, maintaining them in a translocation-competent state. It also specifically binds to its receptor SecA. This chain is Protein-export protein SecB, found in Desulfotalea psychrophila (strain LSv54 / DSM 12343).